Consider the following 137-residue polypeptide: Large-conductance mechanosensitive channel (137 aa).

2 helical membrane-spanning segments follow: residues 9 to 29 (AFAV…GAAF) and 79 to 99 (IQTV…VKAI).

Belongs to the MscL family. As to quaternary structure, homopentamer.

It is found in the cell inner membrane. Functionally, channel that opens in response to stretch forces in the membrane lipid bilayer. May participate in the regulation of osmotic pressure changes within the cell. The polypeptide is Large-conductance mechanosensitive channel (Pseudomonas aeruginosa (strain ATCC 15692 / DSM 22644 / CIP 104116 / JCM 14847 / LMG 12228 / 1C / PRS 101 / PAO1)).